Reading from the N-terminus, the 1057-residue chain is Glycine dehydrogenase (decarboxylating), mitochondrial (1057 aa).

A mitochondrion-targeting transit peptide spans 1–86 (MERARRLANR…GVGYPSQSRS (86 aa)). Residues 18–27 (SEAKQNRKTE) are compositionally biased toward basic and acidic residues. The interval 18-47 (SEAKQNRKTESTSTTTTTPLPFSLSGSSSR) is disordered. The segment covering 28 to 47 (STSTTTTTPLPFSLSGSSSR) has biased composition (low complexity). Position 792 is an N6-(pyridoxal phosphate)lysine (Lys-792).

This sequence belongs to the GcvP family. Homodimer. The glycine cleavage system is composed of four proteins: P, T, L and H. Pyridoxal 5'-phosphate is required as a cofactor. As to expression, highly expressed in leaves. Detected in roots and embryos.

The protein localises to the mitochondrion. It carries out the reaction N(6)-[(R)-lipoyl]-L-lysyl-[glycine-cleavage complex H protein] + glycine + H(+) = N(6)-[(R)-S(8)-aminomethyldihydrolipoyl]-L-lysyl-[glycine-cleavage complex H protein] + CO2. Its function is as follows. The glycine cleavage system catalyzes the degradation of glycine. The P protein binds the alpha-amino group of glycine through its pyridoxal phosphate cofactor; CO(2) is released and the remaining methylamine moiety is then transferred to the lipoamide cofactor of the H protein. This is Glycine dehydrogenase (decarboxylating), mitochondrial (GDCSP) from Pisum sativum (Garden pea).